We begin with the raw amino-acid sequence, 932 residues long: Protein translocase subunit SecA (932 aa).

ATP-binding positions include Gln90, 108-112 (GEGKT), and Asp498.

It belongs to the SecA family. In terms of assembly, monomer and homodimer. Part of the essential Sec protein translocation apparatus which comprises SecA, SecYEG and auxiliary proteins SecDF. Other proteins may also be involved.

It is found in the cell inner membrane. It localises to the cellular thylakoid membrane. Its subcellular location is the cytoplasm. It carries out the reaction ATP + H2O + cellular proteinSide 1 = ADP + phosphate + cellular proteinSide 2.. Functionally, part of the Sec protein translocase complex. Interacts with the SecYEG preprotein conducting channel. Has a central role in coupling the hydrolysis of ATP to the transfer of proteins into and across the cell membrane, serving as an ATP-driven molecular motor driving the stepwise translocation of polypeptide chains across the membrane. In terms of biological role, probably participates in protein translocation into and across both the cytoplasmic and thylakoid membranes in cyanobacterial cells. In Synechocystis sp. (strain ATCC 27184 / PCC 6803 / Kazusa), this protein is Protein translocase subunit SecA.